A 329-amino-acid chain; its full sequence is MASQLTDAFARKFYYLRLSITDVCNFRCTYCLPDGYKPSGVTNKGFLTVDEIRRVTRAFASLGTEKVRLTGGEPSLRRDFTDIIAAVRENDAIRQIAVTTNGYRLERDVANWRDAGLTGINVSVDSLDARQFQAITGQDKFNQVMAGIDAAFEAGFEKVKVNTVLMRDVNHHQLDTFLNWIQHRPIQLRFIELMETGEGSELFRKHHISGQVLRDELLRRGWIHQLRQRSDGPAQVFCHPDYAGEIGLIMPYEKDFCATCNRLRVSSIGKLHLCLFGEGGVNLRDLLEDDTQQQALEARISAALREKKQTHFLHQNNTGITQNLSYIGG.

Residues 8-234 (AFARKFYYLR…QLRQRSDGPA (227 aa)) enclose the Radical SAM core domain. Arg-17 is a binding site for GTP. [4Fe-4S] cluster is bound by residues Cys-24 and Cys-28. Tyr-30 is a binding site for S-adenosyl-L-methionine. Cys-31 provides a ligand contact to [4Fe-4S] cluster. Arg-68 serves as a coordination point for GTP. Gly-72 is a binding site for S-adenosyl-L-methionine. GTP is bound at residue Thr-99. Ser-123 provides a ligand contact to S-adenosyl-L-methionine. Lys-160 lines the GTP pocket. Met-194 contributes to the S-adenosyl-L-methionine binding site. The [4Fe-4S] cluster site is built by Cys-257 and Cys-260. 262–264 (RLR) is a binding site for GTP. Position 274 (Cys-274) interacts with [4Fe-4S] cluster.

This sequence belongs to the radical SAM superfamily. MoaA family. In terms of assembly, monomer and homodimer. It depends on [4Fe-4S] cluster as a cofactor.

It carries out the reaction GTP + AH2 + S-adenosyl-L-methionine = (8S)-3',8-cyclo-7,8-dihydroguanosine 5'-triphosphate + 5'-deoxyadenosine + L-methionine + A + H(+). Its pathway is cofactor biosynthesis; molybdopterin biosynthesis. Its function is as follows. Catalyzes the cyclization of GTP to (8S)-3',8-cyclo-7,8-dihydroguanosine 5'-triphosphate. The polypeptide is GTP 3',8-cyclase (Escherichia fergusonii (strain ATCC 35469 / DSM 13698 / CCUG 18766 / IAM 14443 / JCM 21226 / LMG 7866 / NBRC 102419 / NCTC 12128 / CDC 0568-73)).